We begin with the raw amino-acid sequence, 124 residues long: Small ribosomal subunit protein uS12 (124 aa).

Aspartate 89 is modified (3-methylthioaspartic acid).

It belongs to the universal ribosomal protein uS12 family. As to quaternary structure, part of the 30S ribosomal subunit. Contacts proteins S8 and S17. May interact with IF1 in the 30S initiation complex.

Functionally, with S4 and S5 plays an important role in translational accuracy. Interacts with and stabilizes bases of the 16S rRNA that are involved in tRNA selection in the A site and with the mRNA backbone. Located at the interface of the 30S and 50S subunits, it traverses the body of the 30S subunit contacting proteins on the other side and probably holding the rRNA structure together. The combined cluster of proteins S8, S12 and S17 appears to hold together the shoulder and platform of the 30S subunit. This chain is Small ribosomal subunit protein uS12, found in Aeromonas hydrophila subsp. hydrophila (strain ATCC 7966 / DSM 30187 / BCRC 13018 / CCUG 14551 / JCM 1027 / KCTC 2358 / NCIMB 9240 / NCTC 8049).